The sequence spans 148 residues: Tetratricopeptide repeat protein 32 (148 aa).

3 TPR repeats span residues 12 to 45 (SSAA…CARH), 55 to 88 (ATAY…LPSF), and 89 to 122 (EVPY…NPGF).

The protein is Tetratricopeptide repeat protein 32 (Ttc32) of Mus musculus (Mouse).